The primary structure comprises 367 residues: Cytochrome b (367 aa).

4 consecutive transmembrane segments (helical) span residues 33-53 (FGSLLGICLALQILTGLFLAM), 77-98 (WVLRYMHANGASMFFICLYLHI), 113-133 (WNMGVILLFAVMATAFMGYVL), and 178-198 (FFAFHFLLPFIISALVMVHLL). Residues H83 and H97 each coordinate heme b. Heme b contacts are provided by H182 and H196. H201 contributes to the a ubiquinone binding site. Helical transmembrane passes span 226 to 246 (IKDILGFFMMMLILLCLVLFS), 288 to 308 (LGGVLALVLSILILIIIPFLH), 320 to 340 (FSQCLFWLLVADLLTLTWIGG), and 347 to 367 (YIIIGQLASILYFMIIIVIMP).

This sequence belongs to the cytochrome b family. As to quaternary structure, the cytochrome bc1 complex contains 11 subunits: 3 respiratory subunits (MT-CYB, CYC1 and UQCRFS1), 2 core proteins (UQCRC1 and UQCRC2) and 6 low-molecular weight proteins (UQCRH/QCR6, UQCRB/QCR7, UQCRQ/QCR8, UQCR10/QCR9, UQCR11/QCR10 and a cleavage product of UQCRFS1). This cytochrome bc1 complex then forms a dimer. Heme b serves as cofactor.

It localises to the mitochondrion inner membrane. In terms of biological role, component of the ubiquinol-cytochrome c reductase complex (complex III or cytochrome b-c1 complex) that is part of the mitochondrial respiratory chain. The b-c1 complex mediates electron transfer from ubiquinol to cytochrome c. Contributes to the generation of a proton gradient across the mitochondrial membrane that is then used for ATP synthesis. The protein is Cytochrome b (MT-CYB) of Hypsugo savii (Savi's pipistrelle).